The primary structure comprises 90 residues: Large ribosomal subunit protein bL27 (90 aa).

The interval 1-21 (MAHTKAGGTTRNSRDSAGRRL) is disordered.

Belongs to the bacterial ribosomal protein bL27 family.

The chain is Large ribosomal subunit protein bL27 from Metamycoplasma arthritidis (strain 158L3-1) (Mycoplasma arthritidis).